The sequence spans 166 residues: MRVGLYPGTFDPITLGHLDIIRRASALLDKLVIGVAINRDKGPLFCLEERVAMVEAESIKIAAMTGLEIVTHPFENLLIDCARDVGATVIVRGLRAVADFEYEYQMVGMNRQLDDTIETVFLMAEAEHQAIASKLVKEIARLGGDIEKFVTPEVNAALLNKIGRAG.

T9 serves as a coordination point for substrate. Residues 9 to 10 and H17 each bind ATP; that span reads TF. Substrate contacts are provided by K41, L78, and R92. ATP contacts are provided by residues 93-95, E103, and 128-134; these read GLR and HQAIASK.

This sequence belongs to the bacterial CoaD family. In terms of assembly, homohexamer. Mg(2+) is required as a cofactor.

It is found in the cytoplasm. It catalyses the reaction (R)-4'-phosphopantetheine + ATP + H(+) = 3'-dephospho-CoA + diphosphate. It functions in the pathway cofactor biosynthesis; coenzyme A biosynthesis; CoA from (R)-pantothenate: step 4/5. Functionally, reversibly transfers an adenylyl group from ATP to 4'-phosphopantetheine, yielding dephospho-CoA (dPCoA) and pyrophosphate. The chain is Phosphopantetheine adenylyltransferase from Roseobacter denitrificans (strain ATCC 33942 / OCh 114) (Erythrobacter sp. (strain OCh 114)).